The primary structure comprises 240 residues: RNA-binding protein pno1 (240 aa).

Positions 1–15 are enriched in basic and acidic residues; that stretch reads MEAENIRADAFEPAK. The segment at 1 to 61 is disordered; it reads MEAENIRADA…APPKAKRARS (61 aa). The region spanning 164–213 is the KH domain; that stretch reads QSRAIGRLAGKGGRTKFTIENVTKTRIVLADSKIHILGSYQNIQLARRAV.

Belongs to the PNO1 family.

It localises to the nucleus. It is found in the nucleolus. This Drosophila melanogaster (Fruit fly) protein is RNA-binding protein pno1 (l(1)G0004).